The following is a 101-amino-acid chain: Small ribosomal subunit protein bS18c (101 aa).

The segment covering 1–19 has biased composition (basic residues); sequence MDKSKQLFRKSKRSFRRRL. Residues 1-23 are disordered; the sequence is MDKSKQLFRKSKRSFRRRLPPIG.

The protein belongs to the bacterial ribosomal protein bS18 family. Part of the 30S ribosomal subunit.

It localises to the plastid. The protein resides in the chloroplast. This Acorus calamus (Sweet flag) protein is Small ribosomal subunit protein bS18c.